The sequence spans 1041 residues: Cullin-associated NEDD8-dissociated protein 1, C-terminal part (1041 aa).

Disordered regions lie at residues 1-24 (MSSD…ELRE) and 64-103 (DMGE…EGGY). Residues 9–24 (YSHDDEHDPQTDELRE) show a composition bias toward basic and acidic residues. The segment covering 65–103 (MGEDEEMSGTQDDGSEDDVTEEPDLEDDDFEDFEEEGGY) has biased composition (acidic residues). The HEAT 1 repeat unit spans residues 138 to 176 (SLYQQIAPAIVARFNKEREESVKLELVSTMDALVRKTAE). The interval 189–237 (SVGSGSKISRKRRRQDSDASMIDFEPSMGTSSAAGTPLAAPSSPQSGPQ) is disordered. Positions 225 to 237 (PLAAPSSPQSGPQ) are enriched in low complexity. HEAT repeat units follow at residues 242-279 (NALP…VRYG), 339-376 (PFLI…ALTP), 434-472 (LSFE…LCSR), 479-516 (NWVR…NPNT), 525-560 (MKNL…GNAQ), 598-637 (GSGL…NVGV), 670-708 (GASC…GNVK), 710-744 (YLPT…MVRR), 780-817 (LDPP…DSRD), and 822-867 (VLRP…HLGE).

Belongs to the CAND family. In terms of assembly, interacts with candA-N. Interacts with unneddylated cullins culA and culD.

It localises to the nucleus. Functionally, assembly factor of SCF (SKP1-CUL1-F-box protein) E3 ubiquitin ligase complexes that promotes the exchange of the substrate-recognition F-box subunit in SCF complexes, thereby playing a key role in the cellular repertoire of SCF complexes. Acts as a F-box protein exchange factor when interacting with candA-N. The sequence is that of Cullin-associated NEDD8-dissociated protein 1, C-terminal part (candA-C) from Emericella nidulans (strain FGSC A4 / ATCC 38163 / CBS 112.46 / NRRL 194 / M139) (Aspergillus nidulans).